The sequence spans 154 residues: Protein phosphatase 1 regulatory subunit 27 (154 aa).

ANK repeat units lie at residues serine 63–glutamine 92 and threonine 96–alanine 125.

In terms of assembly, interacts with DYSF and PPP1CA.

Inhibits phosphatase activity of protein phosphatase 1 (PP1) complexes. The protein is Protein phosphatase 1 regulatory subunit 27 (Ppp1r27) of Mus musculus (Mouse).